Here is a 172-residue protein sequence, read N- to C-terminus: Small ribosomal subunit protein uS5 (172 aa).

The S5 DRBM domain occupies 17–80 (LKEKMIAVNR…EEARRNMTKV (64 aa)).

This sequence belongs to the universal ribosomal protein uS5 family. Part of the 30S ribosomal subunit. Contacts proteins S4 and S8.

In terms of biological role, with S4 and S12 plays an important role in translational accuracy. Functionally, located at the back of the 30S subunit body where it stabilizes the conformation of the head with respect to the body. This Polaromonas sp. (strain JS666 / ATCC BAA-500) protein is Small ribosomal subunit protein uS5.